Consider the following 509-residue polypeptide: GMP synthase [glutamine-hydrolyzing] (509 aa).

The region spanning 4–194 is the Glutamine amidotransferase type-1 domain; sequence LVLVVDFGGQ…LYNICGLENS (191 aa). Cys-81 functions as the Nucleophile in the catalytic mechanism. Residues His-168 and Glu-170 contribute to the active site. A GMPS ATP-PPase domain is found at 195 to 384; that stretch reads WSMASFAEEK…LGIPHHLVWR (190 aa). Residue 222–228 participates in ATP binding; it reads SGGVDSS.

In terms of assembly, homodimer.

The catalysed reaction is XMP + L-glutamine + ATP + H2O = GMP + L-glutamate + AMP + diphosphate + 2 H(+). It functions in the pathway purine metabolism; GMP biosynthesis; GMP from XMP (L-Gln route): step 1/1. Catalyzes the synthesis of GMP from XMP. The protein is GMP synthase [glutamine-hydrolyzing] of Clostridium perfringens (strain 13 / Type A).